A 184-amino-acid polypeptide reads, in one-letter code: UPF0398 protein BCB4264_A1614 (184 aa).

This sequence belongs to the UPF0398 family.

This is UPF0398 protein BCB4264_A1614 from Bacillus cereus (strain B4264).